The following is a 127-amino-acid chain: uncharacterized protein (127 aa).

Residues 71-126 are a coiled coil; sequence FYLREYRRIRRRIKELKNRAKYISKGEIAYNPKIMKEVEALKEKLSEIEKKIEELK.

This is an uncharacterized protein from Aquifex aeolicus (strain VF5).